The primary structure comprises 75 residues: Exodeoxyribonuclease 7 small subunit (75 aa).

The protein belongs to the XseB family. Heterooligomer composed of large and small subunits.

Its subcellular location is the cytoplasm. It catalyses the reaction Exonucleolytic cleavage in either 5'- to 3'- or 3'- to 5'-direction to yield nucleoside 5'-phosphates.. Functionally, bidirectionally degrades single-stranded DNA into large acid-insoluble oligonucleotides, which are then degraded further into small acid-soluble oligonucleotides. The chain is Exodeoxyribonuclease 7 small subunit from Nostoc punctiforme (strain ATCC 29133 / PCC 73102).